Consider the following 156-residue polypeptide: 3-hydroxyacyl-[acyl-carrier-protein] dehydratase FabZ (156 aa).

Residue His-57 is part of the active site.

Belongs to the thioester dehydratase family. FabZ subfamily.

The protein localises to the cytoplasm. It catalyses the reaction a (3R)-hydroxyacyl-[ACP] = a (2E)-enoyl-[ACP] + H2O. Its function is as follows. Involved in unsaturated fatty acids biosynthesis. Catalyzes the dehydration of short chain beta-hydroxyacyl-ACPs and long chain saturated and unsaturated beta-hydroxyacyl-ACPs. This is 3-hydroxyacyl-[acyl-carrier-protein] dehydratase FabZ from Anaeromyxobacter dehalogenans (strain 2CP-1 / ATCC BAA-258).